The chain runs to 384 residues: Dual-specificity RNA methyltransferase RlmN (384 aa).

Catalysis depends on glutamate 105, which acts as the Proton acceptor. The region spanning 111 to 350 (EVDRATLCVS…TIVRKTRGDD (240 aa)) is the Radical SAM core domain. Residues cysteine 118 and cysteine 355 are joined by a disulfide bond. [4Fe-4S] cluster is bound by residues cysteine 125, cysteine 129, and cysteine 132. S-adenosyl-L-methionine-binding positions include 179-180 (GE), serine 211, 233-235 (SLH), and asparagine 312. Catalysis depends on cysteine 355, which acts as the S-methylcysteine intermediate.

It belongs to the radical SAM superfamily. RlmN family. Requires [4Fe-4S] cluster as cofactor.

The protein localises to the cytoplasm. It carries out the reaction adenosine(2503) in 23S rRNA + 2 reduced [2Fe-2S]-[ferredoxin] + 2 S-adenosyl-L-methionine = 2-methyladenosine(2503) in 23S rRNA + 5'-deoxyadenosine + L-methionine + 2 oxidized [2Fe-2S]-[ferredoxin] + S-adenosyl-L-homocysteine. The enzyme catalyses adenosine(37) in tRNA + 2 reduced [2Fe-2S]-[ferredoxin] + 2 S-adenosyl-L-methionine = 2-methyladenosine(37) in tRNA + 5'-deoxyadenosine + L-methionine + 2 oxidized [2Fe-2S]-[ferredoxin] + S-adenosyl-L-homocysteine. Specifically methylates position 2 of adenine 2503 in 23S rRNA and position 2 of adenine 37 in tRNAs. m2A2503 modification seems to play a crucial role in the proofreading step occurring at the peptidyl transferase center and thus would serve to optimize ribosomal fidelity. This is Dual-specificity RNA methyltransferase RlmN from Escherichia coli O9:H4 (strain HS).